A 466-amino-acid chain; its full sequence is UDP-N-acetylmuramoylalanine--D-glutamate ligase (466 aa).

124–130 (GSDGKTT) contacts ATP.

This sequence belongs to the MurCDEF family.

The protein resides in the cytoplasm. The enzyme catalyses UDP-N-acetyl-alpha-D-muramoyl-L-alanine + D-glutamate + ATP = UDP-N-acetyl-alpha-D-muramoyl-L-alanyl-D-glutamate + ADP + phosphate + H(+). Its pathway is cell wall biogenesis; peptidoglycan biosynthesis. Functionally, cell wall formation. Catalyzes the addition of glutamate to the nucleotide precursor UDP-N-acetylmuramoyl-L-alanine (UMA). This is UDP-N-acetylmuramoylalanine--D-glutamate ligase from Acetivibrio thermocellus (strain ATCC 27405 / DSM 1237 / JCM 9322 / NBRC 103400 / NCIMB 10682 / NRRL B-4536 / VPI 7372) (Clostridium thermocellum).